Reading from the N-terminus, the 927-residue chain is Perchlorate reductase subunit alpha (927 aa).

A signal peptide (tat-type signal) is located at residues 1–31; that stretch reads MVQMTRRGFLLASGATLLGSSLSFRTLAAAA. Positions 53-116 constitute a 4Fe-4S Mo/W bis-MGD-type domain; that stretch reads DKKTRGAHLI…CAHDYMYGPH (64 aa). [4Fe-4S] cluster contacts are provided by His60, Cys64, Cys68, and Cys102. Residue Asp198 coordinates Mo-bis(molybdopterin guanine dinucleotide).

It belongs to the prokaryotic molybdopterin-containing oxidoreductase family. As to quaternary structure, heterotrimer of alpha, beta and gamma subunits. Requires [4Fe-4S] cluster as cofactor. The cofactor is Mo-bis(molybdopterin guanine dinucleotide). Predicted to be exported by the Tat system. The position of the signal peptide cleavage has not been experimentally proven.

The protein resides in the periplasm. In terms of biological role, component of the perchlorate reductase that catalyzes the reduction of perchlorate to chlorite and allows anaerobic growth on perchlorate as the sole electron acceptor. Is probably also able to reduce chlorate to chlorite. The alpha subunit is likely the catalytic subunit. This chain is Perchlorate reductase subunit alpha (pcrA), found in Dechloromonas aromatica (strain RCB).